A 459-amino-acid polypeptide reads, in one-letter code: NADH oxidase (459 aa).

FAD is bound at residue N10. The Proton acceptor role is filled by H11. 9 residues coordinate FAD: A12, D34, Q35, C44, V81, A110, S113, K143, and Y172. The active-site Redox-active is the C44. At C44 the chain carries Cysteine sulfinic acid (-SO2H). Residues I173, D192, Y201, and G256 each contribute to the NAD(+) site. D294 lines the FAD pocket. Residue A310 coordinates NAD(+). 3 residues coordinate FAD: L311, A312, and S313. G341 contacts NAD(+). Position 439 (F439) interacts with FAD.

It belongs to the class-III pyridine nucleotide-disulfide oxidoreductase family. The cofactor is FAD.

The protein localises to the secreted. Its subcellular location is the cell wall. The catalysed reaction is 2 NADH + O2 + 2 H(+) = 2 NAD(+) + 2 H2O. In terms of biological role, catalyzes the four-electron reduction of molecular oxygen to water. Plays a role in redox balance maintenance. May be involved in mediating bacterial adhesion to host cells. May be considered a potential virulence factor. The protein is NADH oxidase of Streptococcus pneumoniae serotype 4 (strain ATCC BAA-334 / TIGR4).